Reading from the N-terminus, the 228-residue chain is Homeobox-leucine zipper protein ATHB-53 (228 aa).

A disordered region spans residues 36–62 (DGGEESKPVKRRRKRRSKGSSATNEED). The span at 44-53 (VKRRRKRRSK) shows a compositional bias: basic residues. Residues 68–127 (GMLRKRKLTDEQVNMLEYSFGNEHKLESGRKEKIAGELGLDPRQVAVWFQNRRARWKNKK) constitute a DNA-binding region (homeobox). The leucine-zipper stretch occupies residues 128–156 (LEEEYAKLKNHHDNVVLGQCQLESQILKL).

Belongs to the HD-ZIP homeobox family. Class I subfamily. As to expression, expressed in root meristem, late flowers and siliques.

Its subcellular location is the nucleus. Probable transcription factor that may play a regulatory role in auxin/cytokinin signaling during root development. This is Homeobox-leucine zipper protein ATHB-53 (ATHB-53) from Arabidopsis thaliana (Mouse-ear cress).